The chain runs to 248 residues: ATP synthase subunit a, chloroplastic (248 aa).

5 consecutive transmembrane segments (helical) span residues 35 to 55, 94 to 114, 133 to 153, 202 to 222, and 224 to 244; these read GQVF…AIAG, IPYI…GALI, INTT…AGLS, VFTL…GLFA, and SIQA…ALEG.

The protein belongs to the ATPase A chain family. As to quaternary structure, F-type ATPases have 2 components, CF(1) - the catalytic core - and CF(0) - the membrane proton channel. CF(1) has five subunits: alpha(3), beta(3), gamma(1), delta(1), epsilon(1). CF(0) has four main subunits: a, b, b' and c.

The protein resides in the plastid. It is found in the chloroplast thylakoid membrane. In terms of biological role, key component of the proton channel; it plays a direct role in the translocation of protons across the membrane. This Antithamnion sp. (Red alga) protein is ATP synthase subunit a, chloroplastic.